Reading from the N-terminus, the 359-residue chain is Glyceraldehyde-3-phosphate dehydrogenase, glycosomal (359 aa).

NAD(+) contacts are provided by residues 12 to 13 (RI), Asp38, Gln91, and Ser134. Residues 165 to 167 (SCT), Thr197, 226 to 227 (TG), and Arg249 each bind D-glyceraldehyde 3-phosphate. The Nucleophile role is filled by Cys166. Asn335 contributes to the NAD(+) binding site. The Microbody targeting signal signature appears at 357–359 (ARL).

Belongs to the glyceraldehyde-3-phosphate dehydrogenase family. As to quaternary structure, homotetramer.

The protein resides in the glycosome. The enzyme catalyses D-glyceraldehyde 3-phosphate + phosphate + NAD(+) = (2R)-3-phospho-glyceroyl phosphate + NADH + H(+). It participates in carbohydrate degradation; glycolysis; pyruvate from D-glyceraldehyde 3-phosphate: step 1/5. In Trypanosoma cruzi, this protein is Glyceraldehyde-3-phosphate dehydrogenase, glycosomal.